Consider the following 87-residue polypeptide: Small ribosomal subunit protein uS17 (87 aa).

This sequence belongs to the universal ribosomal protein uS17 family. As to quaternary structure, part of the 30S ribosomal subunit.

One of the primary rRNA binding proteins, it binds specifically to the 5'-end of 16S ribosomal RNA. This Hydrogenovibrio crunogenus (strain DSM 25203 / XCL-2) (Thiomicrospira crunogena) protein is Small ribosomal subunit protein uS17.